The primary structure comprises 707 residues: SPX domain-containing membrane protein At4g11810 (707 aa).

Residues 2-145 form the SPX domain; sequence VAFGKKLKER…GYRFTNYYVK (144 aa). The next 6 helical transmembrane spans lie at 252 to 272, 283 to 303, 320 to 340, 342 to 361, 380 to 400, and 416 to 436; these read FMSLLLNLANTFLYMVNTYII, LGAAATVCGVVIGAMAVAQLF, LIFSSIVLFFGNLLYALAYDF, SLALLLIGRLFCGFGSARAV, AGFVSASALGMACGPALAGLL, and LPGWVMAVAWLLYLVWLAISF. Acidic residues predominate over residues 481–498; the sequence is EETEHDEEDDGDGSEESS. The interval 481-503 is disordered; that stretch reads EETEHDEEDDGDGSEESSDDSRK. The next 5 membrane-spanning stretches (helical) occupy residues 523 to 543, 557 to 577, 586 to 606, 614 to 634, and 679 to 699; these read LLIYFMLKYAMEILLSESSVV, IFLFCLGLTVLPVNLVVGSYI, ILLASEIMVCIGIVLSFHVVI, VISGFIMFVSAEVLEGVNLSL, and MLLNVTLLPSLIICVLSILAT.

It belongs to the major facilitator superfamily.

The protein resides in the membrane. The polypeptide is SPX domain-containing membrane protein At4g11810 (Arabidopsis thaliana (Mouse-ear cress)).